We begin with the raw amino-acid sequence, 613 residues long: Myosin light chain kinase 2, skeletal/cardiac muscle (613 aa).

Positions 1–20 (MTTENGAVELGSQSLSTEQT) are enriched in polar residues. The interval 1–168 (MTTENGAVEL…RGSPAFLHSP (168 aa)) is disordered. Residues 32-55 (SEKEPSAPATEKDLSPPNAKKDPG) show a composition bias toward basic and acidic residues. Residues 56–66 (APDPKNNPDPP) show a composition bias toward pro residues. The span at 67 to 83 (SLKKDPAKAPGPEKKGD) shows a compositional bias: basic and acidic residues. Over residues 95 to 105 (SGEGDGGGGPA) the composition is skewed to gly residues. A compositionally biased stretch (low complexity) spans 106–122 (EGSEGPPAALPLPTATA). Residues 145 to 158 (KAGKKAAECREAGR) are compositionally biased toward basic and acidic residues. Ser161, Ser167, and Ser169 each carry phosphoserine. The disordered stretch occupies residues 219–240 (EKKKEEAEKASGQAGQAKVQGD). The Protein kinase domain maps to 302 to 557 (MNSKEALGGG…AEQCLAHPWL (256 aa)). ATP contacts are provided by residues 308–316 (LGGGKFGAV) and Lys331. The active-site Proton acceptor is Asp423. Thr462 is subject to Phosphothreonine. The interval 591–603 (IAVSAANRFKKIS) is calmodulin-binding.

It belongs to the protein kinase superfamily. CAMK Ser/Thr protein kinase family. In terms of assembly, may interact with centrin.

Its subcellular location is the cytoplasm. The catalysed reaction is L-seryl-[myosin light chain] + ATP = O-phospho-L-seryl-[myosin light chain] + ADP + H(+). It catalyses the reaction L-threonyl-[myosin light chain] + ATP = O-phospho-L-threonyl-[myosin light chain] + ADP + H(+). Implicated in the level of global muscle contraction and cardiac function. Phosphorylates a specific serine in the N-terminus of a myosin light chain. The chain is Myosin light chain kinase 2, skeletal/cardiac muscle (Mylk2) from Mus musculus (Mouse).